Here is a 116-residue protein sequence, read N- to C-terminus: Putative pterin-4-alpha-carbinolamine dehydratase (116 aa).

Belongs to the pterin-4-alpha-carbinolamine dehydratase family.

It catalyses the reaction (4aS,6R)-4a-hydroxy-L-erythro-5,6,7,8-tetrahydrobiopterin = (6R)-L-erythro-6,7-dihydrobiopterin + H2O. This Xylella fastidiosa (strain M12) protein is Putative pterin-4-alpha-carbinolamine dehydratase.